The following is a 138-amino-acid chain: MTSERTKNLRELEAALGLLKLSGFQMNRYCTGKQMRKTRLQTCVLNRIFEISRFPSSKTIVDLALLINVHPKSIQKWFQNTRQAIRKKGSTKGALLLAESEEHSAVDIPLPILADIVEIERRTVSKFGLERVFLQDSN.

The segment at residues 30-89 (CTGKQMRKTRLQTCVLNRIFEISRFPSSKTIVDLALLINVHPKSIQKWFQNTRQAIRKKG) is a DNA-binding region (homeobox).

The protein resides in the nucleus. The polypeptide is Homeobox protein HD-11 (HD-11) (Encephalitozoon cuniculi (strain GB-M1) (Microsporidian parasite)).